The chain runs to 257 residues: Phosphate import ATP-binding protein PstB (257 aa).

Positions 11–252 (FNISRLYLYI…PKNELTEKYV (242 aa)) constitute an ABC transporter domain. Position 43–50 (43–50 (GPSGSGKS)) interacts with ATP.

It belongs to the ABC transporter superfamily. Phosphate importer (TC 3.A.1.7) family. The complex is composed of two ATP-binding proteins (PstB), two transmembrane proteins (PstC and PstA) and a solute-binding protein (PstS).

It is found in the cell membrane. It carries out the reaction phosphate(out) + ATP + H2O = ADP + 2 phosphate(in) + H(+). Functionally, part of the ABC transporter complex PstSACB involved in phosphate import. Responsible for energy coupling to the transport system. The protein is Phosphate import ATP-binding protein PstB of Saccharolobus solfataricus (strain ATCC 35092 / DSM 1617 / JCM 11322 / P2) (Sulfolobus solfataricus).